The following is a 238-amino-acid chain: Large ribosomal subunit protein uL1 (238 aa).

It belongs to the universal ribosomal protein uL1 family. As to quaternary structure, part of the 50S ribosomal subunit.

In terms of biological role, binds directly to 23S rRNA. The L1 stalk is quite mobile in the ribosome, and is involved in E site tRNA release. Its function is as follows. Protein L1 is also a translational repressor protein, it controls the translation of the L11 operon by binding to its mRNA. This is Large ribosomal subunit protein uL1 from Nostoc sp. (strain PCC 7120 / SAG 25.82 / UTEX 2576).